Consider the following 75-residue polypeptide: uncharacterized protein (75 aa).

The protein resides in the plastid. The protein localises to the chloroplast. This is an uncharacterized protein from Calycanthus floridus var. glaucus (Eastern sweetshrub).